The chain runs to 106 residues: ATP-dependent Clp protease adapter protein ClpS (106 aa).

The protein belongs to the ClpS family. Binds to the N-terminal domain of the chaperone ClpA.

Functionally, involved in the modulation of the specificity of the ClpAP-mediated ATP-dependent protein degradation. This Vibrio campbellii (strain ATCC BAA-1116) protein is ATP-dependent Clp protease adapter protein ClpS.